We begin with the raw amino-acid sequence, 404 residues long: Agnestins biosynthesis cluster transcription factor AgnL10 (404 aa).

Residues 23 to 50 constitute a DNA-binding region (zn(2)-C6 fungal-type); that stretch reads CNRCAVSKIKCSKEKPACARCAKQDKVC. Disordered stretches follow at residues 54 to 83, 188 to 209, and 294 to 318; these read ATKR…PTAA, ASAS…PSSG, and PGPD…AGVD. Residues 57 to 68 show a composition bias toward basic residues; the sequence is RAGRKRGSRRHN. A compositionally biased stretch (polar residues) spans 74–83; it reads PTTQDLPTAA. Over residues 188-197 the composition is skewed to low complexity; it reads ASASSMDPAA.

It is found in the nucleus. Transcription factor that regulates the expression of the gene cluster that mediates the biosynthesis of agnestins, dihydroxy-xanthone metabolites. The chain is Agnestins biosynthesis cluster transcription factor AgnL10 from Paecilomyces divaricatus (Penicillium divaricatum).